The following is a 156-amino-acid chain: Small ribosomal subunit protein uS7 (156 aa).

Belongs to the universal ribosomal protein uS7 family. Part of the 30S ribosomal subunit. Contacts proteins S9 and S11.

One of the primary rRNA binding proteins, it binds directly to 16S rRNA where it nucleates assembly of the head domain of the 30S subunit. Is located at the subunit interface close to the decoding center, probably blocks exit of the E-site tRNA. The protein is Small ribosomal subunit protein uS7 of Heliobacterium modesticaldum (strain ATCC 51547 / Ice1).